The chain runs to 900 residues: Periodic tryptophan protein 2 (900 aa).

WD repeat units lie at residues 10–47, 50–89, 91–129, 139–178, and 185–229; these read GAPY…SVTL, ETST…VLHR, TFKD…RAVL, NSDD…GVLN, and GHRD…VKMD. Residues 228–284 form a disordered region; sequence MDESEDGHSEPPSPVTPDRADEVMVENGGGVGTELKKRKEYDGKGLESDEEGDDDDE. A compositionally biased stretch (basic and acidic residues) spans 261–274; it reads ELKKRKEYDGKGLE. S275 carries the phosphoserine modification. The segment covering 275–284 has biased composition (acidic residues); sequence SDEEGDDDDE. WD repeat units follow at residues 302–341, 344–384, 387–426, 429–468, 472–512, 515–554, 557–596, and 619–658; these read QASA…CIHL, ISRQ…YILK, GHYF…CFIT, EHTN…NYKT, PTPR…IKDI, GHEA…GTVE, RHNH…LMYT, and SSGK…LLRR. The interval 684-720 is disordered; it reads PIDLIDDDNSDEEGGIDKQSRGNLGYDLPGSRPNRGR. Residues 687-697 show a composition bias toward acidic residues; the sequence is LIDDDNSDEEG. A WD 14 repeat occupies 720–759; it reads RPIIRTKSLSIAPTGRSFAAATTEGVLIFSIDDTFIFDPT.

Belongs to the WD repeat PWP2 family. As to quaternary structure, component of the ribosomal small subunit (SSU) processome. Interacts with TBP1 in the nucleus. Expressed constitutively and ubiquitously; observed in seeds, seedlings, roots, leaves, stems, flowers and siliques.

It localises to the nucleus. It is found in the nucleolus. Involved in nucleolar processing of pre-18S ribosomal RNA. Plays a role early in ribosome biogenesis, especially in the maturation of 5.8S rRNA. Required for guard cell functions. The polypeptide is Periodic tryptophan protein 2 (Arabidopsis thaliana (Mouse-ear cress)).